A 271-amino-acid polypeptide reads, in one-letter code: 3-deoxy-manno-octulosonate cytidylyltransferase (271 aa).

Belongs to the KdsB family.

It is found in the cytoplasm. It catalyses the reaction 3-deoxy-alpha-D-manno-oct-2-ulosonate + CTP = CMP-3-deoxy-beta-D-manno-octulosonate + diphosphate. Its pathway is nucleotide-sugar biosynthesis; CMP-3-deoxy-D-manno-octulosonate biosynthesis; CMP-3-deoxy-D-manno-octulosonate from 3-deoxy-D-manno-octulosonate and CTP: step 1/1. It participates in bacterial outer membrane biogenesis; lipopolysaccharide biosynthesis. Its function is as follows. Activates KDO (a required 8-carbon sugar) for incorporation into bacterial lipopolysaccharide in Gram-negative bacteria. The polypeptide is 3-deoxy-manno-octulosonate cytidylyltransferase (Leptothrix cholodnii (strain ATCC 51168 / LMG 8142 / SP-6) (Leptothrix discophora (strain SP-6))).